Here is a 236-residue protein sequence, read N- to C-terminus: UPF0502 protein Bxeno_B1639 (236 aa).

The protein belongs to the UPF0502 family.

The sequence is that of UPF0502 protein Bxeno_B1639 from Paraburkholderia xenovorans (strain LB400).